The sequence spans 103 residues: Small ribosomal subunit protein uS10 (103 aa).

Belongs to the universal ribosomal protein uS10 family. As to quaternary structure, part of the 30S ribosomal subunit.

Functionally, involved in the binding of tRNA to the ribosomes. The chain is Small ribosomal subunit protein uS10 from Psychrobacter sp. (strain PRwf-1).